Consider the following 552-residue polypeptide: Hyaluronan synthase 2 (552 aa).

Topologically, residues 1–11 are cytoplasmic; the sequence is MYCERFICILR. The helical transmembrane segment at 12–32 threads the bilayer; it reads ILGTTLFGVSLLLGITAAYIV. Over 33-45 the chain is Extracellular; the sequence is GYQFIQTDNYYFS. Residues 46–66 traverse the membrane as a helical segment; the sequence is FGLYGAILASHLIIQSLFAYL. Residues 67 to 374 lie on the Cytoplasmic side of the membrane; the sequence is EHRKMKRSLE…NAMWFHKHHL (308 aa). Residues 375-395 traverse the membrane as a helical segment; the sequence is WMTYEAVITGFFPFFLIATVI. Topologically, residues 396-402 are extracellular; sequence QLFYRGK. The chain crosses the membrane as a helical span at residues 403-423; the sequence is IWNILLFLLTVQLVGLIKSSF. Residues 424 to 429 lie on the Cytoplasmic side of the membrane; sequence ASFLRG. Residues 430–450 form a helical membrane-spanning segment; that stretch reads NIVMVFMSLYSVLYMSSLLPA. The Extracellular segment spans residues 451–475; it reads KMFAIATINKAGWGTSGRKTIVVNF. The chain crosses the membrane as a helical span at residues 476-496; sequence IGLIPVSIWFTILLGRVIFTI. Residues 497 to 510 are Cytoplasmic-facing; that stretch reads YKESKKPFSESKTT. Residues 511–531 form a helical membrane-spanning segment; that stretch reads VLVIGTILYACYWVLLLTLYL. The Extracellular portion of the chain corresponds to 532–552; that stretch reads VLITKCGRRKKEQHYDMVLDV.

The protein belongs to the NodC/HAS family. In terms of assembly, homodimer; dimerization promotes enzymatic activity. It depends on Mg(2+) as a cofactor.

It is found in the cell membrane. The protein resides in the endoplasmic reticulum membrane. The protein localises to the vesicle. Its subcellular location is the golgi apparatus membrane. It localises to the lysosome. It catalyses the reaction [hyaluronan](n) + UDP-N-acetyl-alpha-D-glucosamine = N-acetyl-beta-D-glucosaminyl-(1-&gt;4)-[hyaluronan](n) + UDP + H(+). The enzyme catalyses N-acetyl-beta-D-glucosaminyl-(1-&gt;4)-[hyaluronan](n) + UDP-alpha-D-glucuronate = [hyaluronan](n+1) + UDP + H(+). It participates in glycan biosynthesis; hyaluronan biosynthesis. Its function is as follows. Catalyzes the addition of GlcNAc or GlcUA monosaccharides to the nascent hyaluronan polymer. Therefore, it is essential to hyaluronan synthesis a major component of most extracellular matrices that has a structural role in tissues architectures and regulates cell adhesion, migration and differentiation. This is one of three isoenzymes responsible for cellular hyaluronan synthesis and it is particularly responsible for the synthesis of high molecular mass hyaluronan. In Gallus gallus (Chicken), this protein is Hyaluronan synthase 2 (HAS2).